The sequence spans 126 residues: Late histone H2A.L3 (126 aa).

The segment at 1–20 is disordered; the sequence is MSGRGKGAGKARAKAKSRSA. Position 2 is an N-acetylserine (serine 2). Serine 2 is subject to Phosphoserine. Basic residues predominate over residues 7 to 19; that stretch reads GAGKARAKAKSRS. The residue at position 105 (glutamine 105) is an N5-methylglutamine. Lysine 120 is covalently cross-linked (Glycyl lysine isopeptide (Lys-Gly) (interchain with G-Cter in ubiquitin)).

This sequence belongs to the histone H2A family. In terms of assembly, the nucleosome is a histone octamer containing two molecules each of H2A, H2B, H3 and H4 assembled in one H3-H4 heterotetramer and two H2A-H2B heterodimers. The octamer wraps approximately 147 bp of DNA. Post-translationally, monoubiquitination of Lys-120 gives a specific tag for epigenetic transcriptional repression. In terms of processing, phosphorylation of Ser-2 directly represses transcription.

The protein localises to the nucleus. It localises to the chromosome. Core component of nucleosome. Nucleosomes wrap and compact DNA into chromatin, limiting DNA accessibility to the cellular machineries which require DNA as a template. Histones thereby play a central role in transcription regulation, DNA repair, DNA replication and chromosomal stability. DNA accessibility is regulated via a complex set of post-translational modifications of histones, also called histone code, and nucleosome remodeling. This Strongylocentrotus purpuratus (Purple sea urchin) protein is Late histone H2A.L3.